We begin with the raw amino-acid sequence, 142 residues long: Alpha-lactalbumin (142 aa).

Residues 1-19 form the signal peptide; sequence MMSFVSLLLVGILFHATQA. A C-type lysozyme domain is found at 20 to 142; sequence EQLTKCEVFR…KLDQWLCEKL (123 aa). Intrachain disulfides connect C25/C139, C47/C130, C80/C96, and C92/C110. N-linked (GlcNAc...) asparagine glycosylation is found at N64 and N93. Residues K98, D101, D103, D106, and D107 each contribute to the Ca(2+) site.

The protein belongs to the glycosyl hydrolase 22 family. In terms of assembly, lactose synthase (LS) is a heterodimer of a catalytic component, beta1,4-galactosyltransferase (beta4Gal-T1) and a regulatory component, alpha-lactalbumin (LA). As to expression, mammary gland specific. Secreted in milk.

The protein localises to the secreted. Functionally, regulatory subunit of lactose synthase, changes the substrate specificity of galactosyltransferase in the mammary gland making glucose a good acceptor substrate for this enzyme. This enables LS to synthesize lactose, the major carbohydrate component of milk. In other tissues, galactosyltransferase transfers galactose onto the N-acetylglucosamine of the oligosaccharide chains in glycoproteins. In Bos mutus grunniens (Wild yak), this protein is Alpha-lactalbumin (LALBA).